A 346-amino-acid chain; its full sequence is Holliday junction branch migration complex subunit RuvB (346 aa).

A large ATPase domain (RuvB-L) region spans residues 1 to 182 (MSEPARLISP…FGIPVRLSFY (182 aa)). Residues Leu21, Arg22, Gly63, Lys66, Thr67, Thr68, 129–131 (EDF), Arg172, Tyr182, and Arg219 each bind ATP. Residue Thr67 coordinates Mg(2+). The interval 183-253 (TVEELELIVR…IADEALTRLL (71 aa)) is small ATPAse domain (RuvB-S). Residues 256–346 (NVGFDQLDKR…AQFRLFQEDN (91 aa)) form a head domain (RuvB-H) region. DNA-binding residues include Arg292, Arg311, and Arg316.

The protein belongs to the RuvB family. Homohexamer. Forms an RuvA(8)-RuvB(12)-Holliday junction (HJ) complex. HJ DNA is sandwiched between 2 RuvA tetramers; dsDNA enters through RuvA and exits via RuvB. An RuvB hexamer assembles on each DNA strand where it exits the tetramer. Each RuvB hexamer is contacted by two RuvA subunits (via domain III) on 2 adjacent RuvB subunits; this complex drives branch migration. In the full resolvosome a probable DNA-RuvA(4)-RuvB(12)-RuvC(2) complex forms which resolves the HJ.

It is found in the cytoplasm. It catalyses the reaction ATP + H2O = ADP + phosphate + H(+). In terms of biological role, the RuvA-RuvB-RuvC complex processes Holliday junction (HJ) DNA during genetic recombination and DNA repair, while the RuvA-RuvB complex plays an important role in the rescue of blocked DNA replication forks via replication fork reversal (RFR). RuvA specifically binds to HJ cruciform DNA, conferring on it an open structure. The RuvB hexamer acts as an ATP-dependent pump, pulling dsDNA into and through the RuvAB complex. RuvB forms 2 homohexamers on either side of HJ DNA bound by 1 or 2 RuvA tetramers; 4 subunits per hexamer contact DNA at a time. Coordinated motions by a converter formed by DNA-disengaged RuvB subunits stimulates ATP hydrolysis and nucleotide exchange. Immobilization of the converter enables RuvB to convert the ATP-contained energy into a lever motion, pulling 2 nucleotides of DNA out of the RuvA tetramer per ATP hydrolyzed, thus driving DNA branch migration. The RuvB motors rotate together with the DNA substrate, which together with the progressing nucleotide cycle form the mechanistic basis for DNA recombination by continuous HJ branch migration. Branch migration allows RuvC to scan DNA until it finds its consensus sequence, where it cleaves and resolves cruciform DNA. This is Holliday junction branch migration complex subunit RuvB from Rhizobium johnstonii (strain DSM 114642 / LMG 32736 / 3841) (Rhizobium leguminosarum bv. viciae).